Consider the following 317-residue polypeptide: Melanocyte-stimulating hormone receptor (317 aa).

Residues 1-37 (MPVQGSQRRLLGSLNSTPTATPHLGLAANQTGARCLE) are Extracellular-facing. Asn29 is a glycosylation site (N-linked (GlcNAc...) asparagine). The chain crosses the membrane as a helical span at residues 38–63 (VSIPDGLFLSLGLVSLVENVLVVTAI). Residues 64–72 (AKNRNLHSP) are Cytoplasmic-facing. The helical transmembrane segment at 73–93 (MYCFICCLALSDLLVSGSNML) threads the bilayer. The Extracellular portion of the chain corresponds to 94-118 (ETAVILLLEAGALAARAAVVQQLDN). The helical transmembrane segment at 119 to 140 (VIDVITCSSMLSSLCFLGAIAV) threads the bilayer. The Cytoplasmic portion of the chain corresponds to 141–163 (DRYISIFYALRYHSIVTLPRARR). A helical membrane pass occupies residues 164–183 (AVAAIWVASVLFSMLFIAYY). Residues 184–191 (DHAAVLLC) lie on the Extracellular side of the membrane. Residues 192–211 (LVVFFLAMLVLMAVLYVHML) traverse the membrane as a helical segment. Over 212-240 (ARACQHAQGIARLHKRQRPAHQSFGLKGA) the chain is Cytoplasmic. The helical transmembrane segment at 241-266 (ATLTILLGIFFLCWGPFFLHLTLIVL) threads the bilayer. Residues 267–279 (CPQHPTCSCIFKN) lie on the Extracellular side of the membrane. The helical transmembrane segment at 280 to 300 (FNLFLTLIICNAIIDPLIYAF) threads the bilayer. At 301-317 (RSQELRRTLKEVLLCSW) the chain is on the cytoplasmic side. Cys315 carries S-palmitoyl cysteine lipidation.

It belongs to the G-protein coupled receptor 1 family. In terms of assembly, interacts with MGRN1, but does not undergo MGRN1-mediated ubiquitination; this interaction competes with GNAS-binding and thus inhibits agonist-induced cAMP production. Interacts with OPN3; the interaction results in a decrease in MC1R-mediated cAMP signaling and ultimately a decrease in melanin production in melanocytes.

The protein localises to the cell membrane. Functionally, receptor for MSH (alpha, beta and gamma) and ACTH. The activity of this receptor is mediated by G proteins which activate adenylate cyclase. Mediates melanogenesis, the production of eumelanin (black/brown) and phaeomelanin (red/yellow), via regulation of cAMP signaling in melanocytes. In Erythrocebus patas (Red guenon), this protein is Melanocyte-stimulating hormone receptor (MC1R).